The following is a 208-amino-acid chain: Large ribosomal subunit protein bL25 (208 aa).

Belongs to the bacterial ribosomal protein bL25 family. CTC subfamily. Part of the 50S ribosomal subunit; part of the 5S rRNA/L5/L18/L25 subcomplex. Contacts the 5S rRNA. Binds to the 5S rRNA independently of L5 and L18.

In terms of biological role, this is one of the proteins that binds to the 5S RNA in the ribosome where it forms part of the central protuberance. This Syntrophotalea carbinolica (strain DSM 2380 / NBRC 103641 / GraBd1) (Pelobacter carbinolicus) protein is Large ribosomal subunit protein bL25.